Reading from the N-terminus, the 185-residue chain is Regulator of rDNA transcription protein 13 (185 aa).

WD repeat units follow at residues 9–48 (GHTD…NNGE), 71–108 (GHRA…LKHF), and 111–148 (HTQL…LVRS).

May be involved in the modulation of rDNA transcription. This is Regulator of rDNA transcription protein 13 (RRT13) from Saccharomyces cerevisiae (strain ATCC 204508 / S288c) (Baker's yeast).